We begin with the raw amino-acid sequence, 62 residues long: MQKLFIVFVLFCILRLDAEVDGRTATFCTQSICEESCKRQNKNGRCVIEAEGSLIYHLCKCY.

Positions 1–18 (MQKLFIVFVLFCILRLDA) are cleaved as a signal peptide. Intrachain disulfides connect C28-C46, C33-C59, and C37-C61.

The protein belongs to the short scorpion toxin superfamily. Potassium channel inhibitor family. Alpha-KTx 22 subfamily. Expressed by the venom gland.

It is found in the secreted. In terms of biological role, may block potassium channels. The sequence is that of Potassium channel toxin alpha-KTx 22.1 from Olivierus martensii (Manchurian scorpion).